The chain runs to 359 residues: 3-dehydroquinate synthase (359 aa).

Residues 69–74 (DGEAHK), 103–107 (GVIGD), 127–128 (TT), Lys-140, Lys-149, and 167–170 (TLDT) each bind NAD(+). Positions 182, 245, and 262 each coordinate Zn(2+).

The protein belongs to the sugar phosphate cyclases superfamily. Dehydroquinate synthase family. It depends on Co(2+) as a cofactor. The cofactor is Zn(2+). Requires NAD(+) as cofactor.

Its subcellular location is the cytoplasm. The enzyme catalyses 7-phospho-2-dehydro-3-deoxy-D-arabino-heptonate = 3-dehydroquinate + phosphate. The protein operates within metabolic intermediate biosynthesis; chorismate biosynthesis; chorismate from D-erythrose 4-phosphate and phosphoenolpyruvate: step 2/7. Functionally, catalyzes the conversion of 3-deoxy-D-arabino-heptulosonate 7-phosphate (DAHP) to dehydroquinate (DHQ). This chain is 3-dehydroquinate synthase, found in Methylococcus capsulatus (strain ATCC 33009 / NCIMB 11132 / Bath).